Here is a 1004-residue protein sequence, read N- to C-terminus: Retrovirus-related Pol polyprotein from type-1 retrotransposable element R1 (1004 aa).

The Reverse transcriptase domain maps to 450–717 (QCLLESYFPQ…SEVKHLGIFV (268 aa)). The nucleic acid-binding endonuclease stretch occupies residues 853–1004 (LSGSQFKELL…RLMRGMRIRE (152 aa)).

The catalysed reaction is DNA(n) + a 2'-deoxyribonucleoside 5'-triphosphate = DNA(n+1) + diphosphate. This chain is Retrovirus-related Pol polyprotein from type-1 retrotransposable element R1, found in Bradysia coprophila (Dark-winged fungus gnat).